The chain runs to 38 residues: Plastocyanin (38 aa).

Residues Ala-1–Val-38 enclose the Plastocyanin-like domain. A Cu cation-binding site is contributed by His-25.

It belongs to the plastocyanin family. Requires Cu(2+) as cofactor.

The protein localises to the plastid. Its subcellular location is the chloroplast thylakoid membrane. Its function is as follows. Participates in electron transfer between P700 and the cytochrome b6-f complex in photosystem I. In Thalassiosira oceanica (Marine diatom), this protein is Plastocyanin (PETE).